Here is a 260-residue protein sequence, read N- to C-terminus: Small ribosomal subunit protein uS2 (260 aa).

Residues 240 to 260 are disordered; the sequence is VLKPKLPYQPNRRPYQETVKK.

It belongs to the universal ribosomal protein uS2 family.

The chain is Small ribosomal subunit protein uS2 from Phytoplasma australiense.